The chain runs to 278 residues: 4-deoxy-L-threo-5-hexosulose-uronate ketol-isomerase (278 aa).

Residues H196, H198, E203, and H245 each coordinate Zn(2+).

Belongs to the KduI family. It depends on Zn(2+) as a cofactor.

The catalysed reaction is 5-dehydro-4-deoxy-D-glucuronate = 3-deoxy-D-glycero-2,5-hexodiulosonate. It functions in the pathway glycan metabolism; pectin degradation; 2-dehydro-3-deoxy-D-gluconate from pectin: step 4/5. Its function is as follows. Catalyzes the isomerization of 5-dehydro-4-deoxy-D-glucuronate to 3-deoxy-D-glycero-2,5-hexodiulosonate. This chain is 4-deoxy-L-threo-5-hexosulose-uronate ketol-isomerase, found in Salmonella agona (strain SL483).